A 278-amino-acid chain; its full sequence is Embryonic polyadenylate-binding protein 2 (278 aa).

Disordered stretches follow at residues 21 to 66 (VSSD…GDAG) and 101 to 128 (EGTP…LSPE). The span at 35–50 (ETKEILGPEGGEGKEE) shows a compositional bias: basic and acidic residues. Over residues 51 to 63 (KEEEEDAEEDQDG) the composition is skewed to acidic residues. The 78-residue stretch at 147 to 224 (RSVYVGNVDY…RVIKVLPKRT (78 aa)) folds into the RRM domain. The segment at 227–278 (PGISSTDRGGLRGHPGSRGAPFPHSGLQGRPRLRPQGQNRARGKFSPWFSPY) is disordered.

In terms of tissue distribution, expressed in various adult tissues.

Its subcellular location is the cytoplasm. Binds the poly(A) tail of mRNA. In Homo sapiens (Human), this protein is Embryonic polyadenylate-binding protein 2 (PABPN1L).